We begin with the raw amino-acid sequence, 49 residues long: MRVNITLACTECGERNYISSKNKRNNPERLELKKYCPRDRKVTLHRETK.

Belongs to the bacterial ribosomal protein bL33 family.

In Geobacillus thermodenitrificans (strain NG80-2), this protein is Large ribosomal subunit protein bL33B.